A 388-amino-acid polypeptide reads, in one-letter code: Xylose isomerase (388 aa).

Catalysis depends on residues H54 and D57. Residues E181, E217, H220, D245, D255, D257, and D287 each contribute to the Mg(2+) site.

It belongs to the xylose isomerase family. Homotetramer. It depends on Mg(2+) as a cofactor.

The protein localises to the cytoplasm. It catalyses the reaction alpha-D-xylose = alpha-D-xylulofuranose. In Streptomyces thermocyaneoviolaceus, this protein is Xylose isomerase.